Here is a 154-residue protein sequence, read N- to C-terminus: CASP-like protein 5B2 (154 aa).

Residues 1 to 10 (MKKLLGGPGT) lie on the Cytoplasmic side of the membrane. Residues 11 to 31 (VCGLLLRIGQCASAAASIGVM) form a helical membrane-spanning segment. Over 32–42 (VSAKEFSVHTA) the chain is Extracellular. The chain crosses the membrane as a helical span at residues 43–63 (FCYLIASMGLQLLWSFGLACL). Over 64-77 (DVYALRGKKDLQNP) the chain is Cytoplasmic. A helical transmembrane segment spans residues 78–98 (ILVSLFVVGDWVTAMLSLAAA). Topologically, residues 99–129 (CSSAGVVVLYEKDIKYCNTQSQYPCLRYEVA) are extracellular. The helical transmembrane segment at 130-150 (VALSFVTWIQIAVSSHVTFWI) threads the bilayer. The Cytoplasmic portion of the chain corresponds to 151-154 (LASV).

It belongs to the Casparian strip membrane proteins (CASP) family. As to quaternary structure, homodimer and heterodimers. Expressed in the stele of the root.

It is found in the cell membrane. In Arabidopsis thaliana (Mouse-ear cress), this protein is CASP-like protein 5B2.